The sequence spans 141 residues: Holo-[acyl-carrier-protein] synthase (141 aa).

2 residues coordinate Mg(2+): Asp8 and Glu61.

Belongs to the P-Pant transferase superfamily. AcpS family. The cofactor is Mg(2+).

The protein localises to the cytoplasm. It catalyses the reaction apo-[ACP] + CoA = holo-[ACP] + adenosine 3',5'-bisphosphate + H(+). Its function is as follows. Transfers the 4'-phosphopantetheine moiety from coenzyme A to a Ser of acyl-carrier-protein. This chain is Holo-[acyl-carrier-protein] synthase, found in Rhodopseudomonas palustris (strain HaA2).